Here is a 495-residue protein sequence, read N- to C-terminus: Ribosomal protein uS12 methylthiotransferase RimO (495 aa).

An MTTase N-terminal domain is found at R5–N121. 3 residues coordinate [4Fe-4S] cluster: C14, C50, and C84. The segment at Q145–R183 is disordered. The 232-residue stretch at L184–R415 folds into the Radical SAM core domain. Residues C198, C202, and C205 each coordinate [4Fe-4S] cluster. The TRAM domain occupies E417–P484.

This sequence belongs to the methylthiotransferase family. RimO subfamily. Requires [4Fe-4S] cluster as cofactor.

Its subcellular location is the cytoplasm. The enzyme catalyses L-aspartate(89)-[ribosomal protein uS12]-hydrogen + (sulfur carrier)-SH + AH2 + 2 S-adenosyl-L-methionine = 3-methylsulfanyl-L-aspartate(89)-[ribosomal protein uS12]-hydrogen + (sulfur carrier)-H + 5'-deoxyadenosine + L-methionine + A + S-adenosyl-L-homocysteine + 2 H(+). Its function is as follows. Catalyzes the methylthiolation of an aspartic acid residue of ribosomal protein uS12. The chain is Ribosomal protein uS12 methylthiotransferase RimO from Streptomyces avermitilis (strain ATCC 31267 / DSM 46492 / JCM 5070 / NBRC 14893 / NCIMB 12804 / NRRL 8165 / MA-4680).